Consider the following 356-residue polypeptide: Alanine racemase, catabolic (356 aa).

The Proton acceptor; specific for D-alanine role is filled by Lys-35. Lys-35 carries the N6-(pyridoxal phosphate)lysine modification. Arg-130 is a binding site for substrate. Residue Tyr-253 is the Proton acceptor; specific for L-alanine of the active site. Met-301 contributes to the substrate binding site.

It belongs to the alanine racemase family. The cofactor is pyridoxal 5'-phosphate.

It catalyses the reaction L-alanine = D-alanine. Its function is as follows. Isomerizes L-alanine to D-alanine which is then oxidized to pyruvate by DadA. The polypeptide is Alanine racemase, catabolic (dadX) (Escherichia coli O6:H1 (strain CFT073 / ATCC 700928 / UPEC)).